The chain runs to 301 residues: Small ribosomal subunit protein uS2 (301 aa).

Residues 282-301 (VRKQPVSENENVEAAAAEQK) form a disordered region. The span at 289 to 301 (ENENVEAAAAEQK) shows a compositional bias: low complexity.

The protein belongs to the universal ribosomal protein uS2 family.

The chain is Small ribosomal subunit protein uS2 from Koribacter versatilis (strain Ellin345).